The primary structure comprises 801 residues: Zinc finger Y-chromosomal protein (801 aa).

The residue at position 270 (Ser-270) is a Phosphoserine. The C2H2-type 1 zinc-finger motif lies at 421–443 (YPCMICGKKFKSRGFLKRHMKNH). The C2H2-type 2; atypical zinc-finger motif lies at 452–474 (YHCTDCDYTTNKKISLHNHLESH). C2H2-type zinc fingers lie at residues 484–506 (IECDECGKHFSHAGALFTHKMVH), 515–538 (HKCKFCEYETAEQGLLNRHLLAVH), 544–566 (HICVECGKGFRHPSELRKHMRIH), 572–595 (YQCQYCEYRSADSSNLKTHIKTKH), 601–623 (FKCDICLLTFSDTKEVQQHTLVH), 629–652 (HQCLHCDHKSSNSSDLKRHVISVH), 658–680 (HKCEMCEKGFHRPSELKKHVAVH), 686–709 (HQCRHCDFKIADPFVLSRHILSVH), 715–737 (FRCKRCRKGFRQQNELKKHMKTH), 743–766 (YQCEYCEYSTTDASGFKRHVISIH), and 772–795 (HRCEYCKKGFRRPSEKNQHIMRHH).

The protein belongs to the krueppel C2H2-type zinc-finger protein family. ZFX/ZFY subfamily.

The protein resides in the nucleus. Probable transcriptional activator. Binds to the consensus sequence 5'-AGGCCY-3'. The polypeptide is Zinc finger Y-chromosomal protein (ZFY) (Homo sapiens (Human)).